The following is an 83-amino-acid chain: Acyl carrier protein (83 aa).

The Carrier domain maps to 2 to 77 (NEILSKIKSI…DANQYIKKYL (76 aa)). Position 37 is an O-(pantetheine 4'-phosphoryl)serine (Ser-37).

Belongs to the acyl carrier protein (ACP) family. Post-translationally, 4'-phosphopantetheine is transferred from CoA to a specific serine of apo-ACP by AcpS. This modification is essential for activity because fatty acids are bound in thioester linkage to the sulfhydryl of the prosthetic group.

It is found in the cytoplasm. It participates in lipid metabolism; fatty acid biosynthesis. Functionally, carrier of the growing fatty acid chain in fatty acid biosynthesis. The chain is Acyl carrier protein from Karelsulcia muelleri (strain GWSS) (Sulcia muelleri).